Reading from the N-terminus, the 330-residue chain is Glycerol-3-phosphate dehydrogenase [NAD(P)+] (330 aa).

Residues Ser14, Phe15, Arg35, and Lys109 each contribute to the NADPH site. Residues Lys109 and Gly137 each contribute to the sn-glycerol 3-phosphate site. An NADPH-binding site is contributed by Ala141. Residues Lys192, Asp248, Ser258, Arg259, and Asn260 each coordinate sn-glycerol 3-phosphate. Lys192 acts as the Proton acceptor in catalysis. An NADPH-binding site is contributed by Arg259. 2 residues coordinate NADPH: Leu283 and Glu285.

This sequence belongs to the NAD-dependent glycerol-3-phosphate dehydrogenase family.

It localises to the cytoplasm. It catalyses the reaction sn-glycerol 3-phosphate + NAD(+) = dihydroxyacetone phosphate + NADH + H(+). The enzyme catalyses sn-glycerol 3-phosphate + NADP(+) = dihydroxyacetone phosphate + NADPH + H(+). The protein operates within membrane lipid metabolism; glycerophospholipid metabolism. In terms of biological role, catalyzes the reduction of the glycolytic intermediate dihydroxyacetone phosphate (DHAP) to sn-glycerol 3-phosphate (G3P), the key precursor for phospholipid synthesis. The sequence is that of Glycerol-3-phosphate dehydrogenase [NAD(P)+] from Rickettsia massiliae (strain Mtu5).